Consider the following 436-residue polypeptide: GTPase Der (436 aa).

2 consecutive EngA-type G domains span residues 4–167 and 176–351; these read PVVA…PKEE and VKFS…DNHS. Residues 10–17, 57–61, 119–122, 182–189, 229–233, and 294–297 contribute to the GTP site; these read GRPNVGKS, DTGGI, NKVD, DTAGM, and NKWD. Residues 352 to 436 enclose the KH-like domain; the sequence is LRVQSSMLND…PIRVIARKRK (85 aa).

The protein belongs to the TRAFAC class TrmE-Era-EngA-EngB-Septin-like GTPase superfamily. EngA (Der) GTPase family. As to quaternary structure, associates with the 50S ribosomal subunit.

Functionally, GTPase that plays an essential role in the late steps of ribosome biogenesis. This Listeria welshimeri serovar 6b (strain ATCC 35897 / DSM 20650 / CCUG 15529 / CIP 8149 / NCTC 11857 / SLCC 5334 / V8) protein is GTPase Der.